The chain runs to 522 residues: Maturase K (522 aa).

It belongs to the intron maturase 2 family. MatK subfamily.

Its subcellular location is the plastid. It is found in the chloroplast. Functionally, usually encoded in the trnK tRNA gene intron. Probably assists in splicing its own and other chloroplast group II introns. This Gladiolus papilio (Goldblotch gladiolus) protein is Maturase K.